We begin with the raw amino-acid sequence, 356 residues long: Guanine nucleotide-binding protein alpha-17 subunit (356 aa).

Glycine 2 carries N-myristoyl glycine lipidation. A lipid anchor (S-palmitoyl cysteine) is attached at cysteine 4. The G-alpha domain occupies 32–356 (SIVKLLLLGA…QKNLQKAGMM (325 aa)). Residues 35-48 (KLLLLGAGECGKST) form a G1 motif region. Residues 40–47 (GAGECGKS), 177–183 (LYSRVAT), 202–206 (DVGGQ), 271–274 (NKKD), and alanine 328 each bind GTP. Residues serine 47 and threonine 183 each coordinate Mg(2+). The segment at 175–183 (DILYSRVAT) is G2 motif. The tract at residues 198-207 (FRVFDVGGQR) is G3 motif. A G4 motif region spans residues 267–274 (ILFMNKKD). The interval 326-331 (TCATDT) is G5 motif.

It belongs to the G-alpha family. G proteins are composed of 3 units; alpha, beta and gamma. The alpha chain contains the guanine nucleotide binding site.

Its subcellular location is the cell projection. It is found in the cilium. The protein localises to the dendrite. Its function is as follows. Guanine nucleotide-binding proteins (G proteins) are involved as modulators or transducers in various transmembrane signaling systems. This specific G-alpha subunit plays an important role in olfaction and in cilia morphogenesis. Involved in chemotactic responses to attractants diacetyl, pyrazine, 2,4,5-trimethylthiazole, benzaldehyde, isoamyl alcohol, butanone and 2,3-pentanedione. Displays a redundant function with gpa-3 in chemotactic responses. Involved in avoidance responses to copper, sodium dodecyl sulfate and linoleic acid. Involved in osmotic avoidance and mechanosensory responses. Involved in specifying fan-like morphology of cilia of head sensory neurons AWC. This is Guanine nucleotide-binding protein alpha-17 subunit (odr-3) from Caenorhabditis briggsae.